The following is a 173-amino-acid chain: Crossover junction endodeoxyribonuclease RuvC (173 aa).

Catalysis depends on residues aspartate 11, glutamate 71, and aspartate 143. Mg(2+) contacts are provided by aspartate 11, glutamate 71, and aspartate 143.

The protein belongs to the RuvC family. As to quaternary structure, homodimer which binds Holliday junction (HJ) DNA. The HJ becomes 2-fold symmetrical on binding to RuvC with unstacked arms; it has a different conformation from HJ DNA in complex with RuvA. In the full resolvosome a probable DNA-RuvA(4)-RuvB(12)-RuvC(2) complex forms which resolves the HJ. It depends on Mg(2+) as a cofactor.

The protein localises to the cytoplasm. The catalysed reaction is Endonucleolytic cleavage at a junction such as a reciprocal single-stranded crossover between two homologous DNA duplexes (Holliday junction).. The RuvA-RuvB-RuvC complex processes Holliday junction (HJ) DNA during genetic recombination and DNA repair. Endonuclease that resolves HJ intermediates. Cleaves cruciform DNA by making single-stranded nicks across the HJ at symmetrical positions within the homologous arms, yielding a 5'-phosphate and a 3'-hydroxyl group; requires a central core of homology in the junction. The consensus cleavage sequence is 5'-(A/T)TT(C/G)-3'. Cleavage occurs on the 3'-side of the TT dinucleotide at the point of strand exchange. HJ branch migration catalyzed by RuvA-RuvB allows RuvC to scan DNA until it finds its consensus sequence, where it cleaves and resolves the cruciform DNA. The protein is Crossover junction endodeoxyribonuclease RuvC of Brucella suis (strain ATCC 23445 / NCTC 10510).